The primary structure comprises 376 residues: Putative C-mannosyltransferase DPY19L2P2 (376 aa).

Asn32 is a glycosylation site (N-linked (GlcNAc...) asparagine). 6 helical membrane-spanning segments follow: residues 52-72 (ACFY…LFFI), 107-127 (LRES…TLIL), 154-174 (AQFI…VGYI), 182-202 (IIYM…GNSM), 233-253 (LNCW…LKFL), and 299-319 (LLIY…CFIF).

The protein belongs to the dpy-19 family. In terms of tissue distribution, fibroblast, lung, lymphoblast, spleen and testis.

It localises to the membrane. Its function is as follows. Probable C-mannosyltransferase that mediates C-mannosylation of tryptophan residues on target proteins. In Homo sapiens (Human), this protein is Putative C-mannosyltransferase DPY19L2P2 (DPY19L2P2).